The chain runs to 311 residues: Ribosomal RNA large subunit methyltransferase F (311 aa).

It belongs to the methyltransferase superfamily. METTL16/RlmF family.

It is found in the cytoplasm. It carries out the reaction adenosine(1618) in 23S rRNA + S-adenosyl-L-methionine = N(6)-methyladenosine(1618) in 23S rRNA + S-adenosyl-L-homocysteine + H(+). Functionally, specifically methylates the adenine in position 1618 of 23S rRNA. This Pectobacterium carotovorum subsp. carotovorum (strain PC1) protein is Ribosomal RNA large subunit methyltransferase F.